A 184-amino-acid polypeptide reads, in one-letter code: Mitochondrial import inner membrane translocase subunit Tim22 (184 aa).

Intrachain disulfides connect Cys-59–Cys-131 and Cys-150–Cys-169. The next 3 membrane-spanning stretches (helical) occupy residues 64-84, 115-133, and 160-180; these read ALAC…TAGI, YAKN…ECLV, and AGLK…AVID.

This sequence belongs to the Tim17/Tim22/Tim23 family. In terms of assembly, core component of the TIM22 complex.

It localises to the mitochondrion inner membrane. In terms of biological role, essential core component of the TIM22 complex, a complex that mediates the import and insertion of multi-pass transmembrane proteins into the mitochondrial inner membrane. In the TIM22 complex, it constitutes the voltage-activated and signal-gated channel. Forms a twin-pore translocase that uses the membrane potential as external driving force in 2 voltage-dependent steps. The protein is Mitochondrial import inner membrane translocase subunit Tim22 (timm22) of Xenopus laevis (African clawed frog).